Consider the following 305-residue polypeptide: NAD kinase 2 (305 aa).

The Proton acceptor role is filled by D78. NAD(+) is bound by residues 78–79, 152–153, D182, 193–198, and N251; these read DG, NE, and TAYSLS.

This sequence belongs to the NAD kinase family. It depends on a divalent metal cation as a cofactor.

It localises to the cytoplasm. It catalyses the reaction NAD(+) + ATP = ADP + NADP(+) + H(+). Involved in the regulation of the intracellular balance of NAD and NADP, and is a key enzyme in the biosynthesis of NADP. Catalyzes specifically the phosphorylation on 2'-hydroxyl of the adenosine moiety of NAD to yield NADP. In Synechococcus sp. (strain ATCC 27144 / PCC 6301 / SAUG 1402/1) (Anacystis nidulans), this protein is NAD kinase 2.